The primary structure comprises 418 residues: Serine hydroxymethyltransferase (418 aa).

Residues Leu121 and 125–127 each bind (6S)-5,6,7,8-tetrahydrofolate; that span reads GHL. At Lys230 the chain carries N6-(pyridoxal phosphate)lysine. Residue 355–357 participates in (6S)-5,6,7,8-tetrahydrofolate binding; the sequence is SPF.

Belongs to the SHMT family. In terms of assembly, homodimer. Pyridoxal 5'-phosphate serves as cofactor.

The protein localises to the cytoplasm. The catalysed reaction is (6R)-5,10-methylene-5,6,7,8-tetrahydrofolate + glycine + H2O = (6S)-5,6,7,8-tetrahydrofolate + L-serine. It participates in one-carbon metabolism; tetrahydrofolate interconversion. It functions in the pathway amino-acid biosynthesis; glycine biosynthesis; glycine from L-serine: step 1/1. Catalyzes the reversible interconversion of serine and glycine with tetrahydrofolate (THF) serving as the one-carbon carrier. This reaction serves as the major source of one-carbon groups required for the biosynthesis of purines, thymidylate, methionine, and other important biomolecules. Also exhibits THF-independent aldolase activity toward beta-hydroxyamino acids, producing glycine and aldehydes, via a retro-aldol mechanism. The sequence is that of Serine hydroxymethyltransferase from Streptococcus pyogenes serotype M5 (strain Manfredo).